The following is a 740-amino-acid chain: Ion-translocating oxidoreductase complex subunit C (740 aa).

4Fe-4S ferredoxin-type domains follow at residues 369–397 (GEPQ…QQLY) and 407–436 (KATT…VQYF). [4Fe-4S] cluster contacts are provided by C377, C380, C383, C387, C416, C419, C422, and C426. Disordered regions lie at residues 571-590 (LEQQ…RKAA) and 602-716 (KLEQ…DPRK). Low complexity-rich tracts occupy residues 573-583 (QQQANAEPEQQ) and 637-647 (QQQANAEPEQQ).

The protein belongs to the 4Fe4S bacterial-type ferredoxin family. RnfC subfamily. In terms of assembly, the complex is composed of six subunits: RsxA, RsxB, RsxC, RsxD, RsxE and RsxG. [4Fe-4S] cluster serves as cofactor.

The protein localises to the cell inner membrane. Its function is as follows. Part of a membrane-bound complex that couples electron transfer with translocation of ions across the membrane. Required to maintain the reduced state of SoxR. Probably transfers electron from NAD(P)H to SoxR. The chain is Ion-translocating oxidoreductase complex subunit C from Escherichia coli (strain K12).